Consider the following 522-residue polypeptide: Bifunctional purine biosynthesis protein PurH (522 aa).

The region spanning 1-143 is the MGS-like domain; sequence MIRRALISVS…KNHARVAVVV (143 aa).

It belongs to the PurH family.

It carries out the reaction (6R)-10-formyltetrahydrofolate + 5-amino-1-(5-phospho-beta-D-ribosyl)imidazole-4-carboxamide = 5-formamido-1-(5-phospho-D-ribosyl)imidazole-4-carboxamide + (6S)-5,6,7,8-tetrahydrofolate. The catalysed reaction is IMP + H2O = 5-formamido-1-(5-phospho-D-ribosyl)imidazole-4-carboxamide. The protein operates within purine metabolism; IMP biosynthesis via de novo pathway; 5-formamido-1-(5-phospho-D-ribosyl)imidazole-4-carboxamide from 5-amino-1-(5-phospho-D-ribosyl)imidazole-4-carboxamide (10-formyl THF route): step 1/1. It functions in the pathway purine metabolism; IMP biosynthesis via de novo pathway; IMP from 5-formamido-1-(5-phospho-D-ribosyl)imidazole-4-carboxamide: step 1/1. The sequence is that of Bifunctional purine biosynthesis protein PurH from Sorangium cellulosum (strain So ce56) (Polyangium cellulosum (strain So ce56)).